We begin with the raw amino-acid sequence, 199 residues long: Recombination protein RecR (199 aa).

A C4-type zinc finger spans residues 56–71 (CAICGNVAEHEQCRIC). The 96-residue stretch at 79 to 174 (TVLCVVEEPK…RVTRLASGLP (96 aa)) folds into the Toprim domain.

The protein belongs to the RecR family.

Its function is as follows. May play a role in DNA repair. It seems to be involved in an RecBC-independent recombinational process of DNA repair. It may act with RecF and RecO. The chain is Recombination protein RecR from Acidothermus cellulolyticus (strain ATCC 43068 / DSM 8971 / 11B).